Reading from the N-terminus, the 164-residue chain is Interferon gamma (164 aa).

An N-terminal signal peptide occupies residues Met-1 to Gly-19. N-linked (GlcNAc...) asparagine glycans are attached at residues Asn-42, Asn-61, and Asn-95.

Belongs to the type II (or gamma) interferon family. Homodimer.

Its subcellular location is the secreted. Produced by lymphocytes activated by specific antigens or mitogens. IFN-gamma, in addition to having antiviral activity, has important immunoregulatory functions. It is a potent activator of macrophages, it has antiproliferative effects on transformed cells and it can potentiate the antiviral and antitumor effects of the type I interferons. The polypeptide is Interferon gamma (IFNG) (Anas platyrhynchos (Mallard)).